Consider the following 215-residue polypeptide: Ceramide-1-phosphate transfer protein (215 aa).

Residues Asp57, Lys61, Arg107, Arg111, and His151 each contribute to the an N-acylsphingoid base 1-phosphate site.

Belongs to the GLTP family.

It is found in the cytoplasm. The protein resides in the cytosol. It localises to the golgi apparatus. Its subcellular location is the trans-Golgi network membrane. The protein localises to the cell membrane. It is found in the endosome membrane. The protein resides in the nucleus outer membrane. The catalysed reaction is N-(hexadecanoyl)-sphing-4-enine-1-phosphate(in) = N-(hexadecanoyl)-sphing-4-enine-1-phosphate(out). It carries out the reaction N-(9Z-octadecenoyl)-sphing-4-enine-1-phosphate(in) = N-(9Z-octadecenoyl)-sphing-4-enine-1-phosphate(out). Its function is as follows. Mediates the intracellular transfer of ceramide-1-phosphate (C1P) between organelle membranes and the cell membrane. Required for normal structure of the Golgi stacks. Can bind phosphoceramides with a variety of aliphatic chains, but has a preference for lipids with saturated C16:0 or monounsaturated C18:1 aliphatic chains, and is inefficient with phosphoceramides containing lignoceryl (C24:0). Plays a role in the regulation of the cellular levels of ceramide-1-phosphate, and thereby contributes to the regulation of phospholipase PLA2G4A activity and the release of arachidonic acid. Has no activity with galactosylceramide, lactosylceramide, sphingomyelin, phosphatidylcholine, phosphatidic acid and ceramide. C1P transfer is stimulated by phosphatidylserine in C1P source vesicles. Regulates autophagy and pyroptosis, but not apoptosis. The chain is Ceramide-1-phosphate transfer protein (cptp) from Xenopus tropicalis (Western clawed frog).